The following is a 499-amino-acid chain: Glycerol kinase (499 aa).

Residue threonine 13 participates in ADP binding. ATP contacts are provided by threonine 13, threonine 14, and serine 15. Threonine 13 is a sn-glycerol 3-phosphate binding site. Residue arginine 17 participates in ADP binding. Residues arginine 83, glutamate 84, tyrosine 135, and aspartate 245 each coordinate sn-glycerol 3-phosphate. Glycerol contacts are provided by arginine 83, glutamate 84, tyrosine 135, aspartate 245, and glutamine 246. Threonine 267 and glycine 310 together coordinate ADP. ATP is bound by residues threonine 267, glycine 310, glutamine 314, and alanine 411. ADP contacts are provided by alanine 411 and asparagine 415.

It belongs to the FGGY kinase family.

The enzyme catalyses glycerol + ATP = sn-glycerol 3-phosphate + ADP + H(+). It functions in the pathway polyol metabolism; glycerol degradation via glycerol kinase pathway; sn-glycerol 3-phosphate from glycerol: step 1/1. Its activity is regulated as follows. Inhibited by fructose 1,6-bisphosphate (FBP). Functionally, key enzyme in the regulation of glycerol uptake and metabolism. Catalyzes the phosphorylation of glycerol to yield sn-glycerol 3-phosphate. This Xylella fastidiosa (strain M12) protein is Glycerol kinase.